Here is a 728-residue protein sequence, read N- to C-terminus: Phosphoribosylformylglycinamidine synthase subunit PurL (728 aa).

H42 is a catalytic residue. ATP-binding residues include Y45 and K84. E86 provides a ligand contact to Mg(2+). Substrate contacts are provided by residues S87–H90 and R109. The Proton acceptor role is filled by H88. D110 contributes to the Mg(2+) binding site. Q237 provides a ligand contact to substrate. Position 265 (D265) interacts with Mg(2+). E309–Q311 contacts substrate. 2 residues coordinate ATP: D491 and G528. A Mg(2+)-binding site is contributed by N529. Position 531 (S531) interacts with substrate.

It belongs to the FGAMS family. In terms of assembly, monomer. Part of the FGAM synthase complex composed of 1 PurL, 1 PurQ and 2 PurS subunits.

The protein localises to the cytoplasm. It catalyses the reaction N(2)-formyl-N(1)-(5-phospho-beta-D-ribosyl)glycinamide + L-glutamine + ATP + H2O = 2-formamido-N(1)-(5-O-phospho-beta-D-ribosyl)acetamidine + L-glutamate + ADP + phosphate + H(+). The protein operates within purine metabolism; IMP biosynthesis via de novo pathway; 5-amino-1-(5-phospho-D-ribosyl)imidazole from N(2)-formyl-N(1)-(5-phospho-D-ribosyl)glycinamide: step 1/2. Its function is as follows. Part of the phosphoribosylformylglycinamidine synthase complex involved in the purines biosynthetic pathway. Catalyzes the ATP-dependent conversion of formylglycinamide ribonucleotide (FGAR) and glutamine to yield formylglycinamidine ribonucleotide (FGAM) and glutamate. The FGAM synthase complex is composed of three subunits. PurQ produces an ammonia molecule by converting glutamine to glutamate. PurL transfers the ammonia molecule to FGAR to form FGAM in an ATP-dependent manner. PurS interacts with PurQ and PurL and is thought to assist in the transfer of the ammonia molecule from PurQ to PurL. This chain is Phosphoribosylformylglycinamidine synthase subunit PurL, found in Campylobacter jejuni subsp. jejuni serotype O:2 (strain ATCC 700819 / NCTC 11168).